Reading from the N-terminus, the 178-residue chain is Crossover junction endodeoxyribonuclease RuvC (178 aa).

Catalysis depends on residues D18, E78, and D150. Mg(2+) is bound by residues D18, E78, and D150.

Belongs to the RuvC family. Homodimer which binds Holliday junction (HJ) DNA. The HJ becomes 2-fold symmetrical on binding to RuvC with unstacked arms; it has a different conformation from HJ DNA in complex with RuvA. In the full resolvosome a probable DNA-RuvA(4)-RuvB(12)-RuvC(2) complex forms which resolves the HJ. Requires Mg(2+) as cofactor.

Its subcellular location is the cytoplasm. The enzyme catalyses Endonucleolytic cleavage at a junction such as a reciprocal single-stranded crossover between two homologous DNA duplexes (Holliday junction).. Functionally, the RuvA-RuvB-RuvC complex processes Holliday junction (HJ) DNA during genetic recombination and DNA repair. Endonuclease that resolves HJ intermediates. Cleaves cruciform DNA by making single-stranded nicks across the HJ at symmetrical positions within the homologous arms, yielding a 5'-phosphate and a 3'-hydroxyl group; requires a central core of homology in the junction. The consensus cleavage sequence is 5'-(A/T)TT(C/G)-3'. Cleavage occurs on the 3'-side of the TT dinucleotide at the point of strand exchange. HJ branch migration catalyzed by RuvA-RuvB allows RuvC to scan DNA until it finds its consensus sequence, where it cleaves and resolves the cruciform DNA. The polypeptide is Crossover junction endodeoxyribonuclease RuvC (Granulibacter bethesdensis (strain ATCC BAA-1260 / CGDNIH1)).